We begin with the raw amino-acid sequence, 422 residues long: E3 ubiquitin-protein ligase CBLL2 (422 aa).

The segment at 54–94 (CDKCDLPIKIYGRIIPCKHAFCYNCANLYDKIGYKICPRCS) adopts an RING-type zinc-finger fold. The HYB domain stretch occupies residues 93 to 151 (CSYPVLRIEEHKRGSVFMCSVVQGCKRTYLSQKSLQAHIKRRHKRARKQVASASLEKLR). The C2H2-type zinc finger occupies 109-135 (FMCSVVQGCKRTYLSQKSLQAHIKRRH). Disordered regions lie at residues 190-213 (MQQM…PELS) and 378-422 (QTDA…HRPY). The span at 195 to 205 (HEQHNQPHKDL) shows a compositional bias: basic and acidic residues. The span at 393 to 405 (LPPPPPTWSPPPS) shows a compositional bias: pro residues. Over residues 410–422 (GSHHSYQRRHRPY) the composition is skewed to basic residues.

In terms of assembly, homodimer.

The protein resides in the cytoplasm. The enzyme catalyses S-ubiquitinyl-[E2 ubiquitin-conjugating enzyme]-L-cysteine + [acceptor protein]-L-lysine = [E2 ubiquitin-conjugating enzyme]-L-cysteine + N(6)-ubiquitinyl-[acceptor protein]-L-lysine.. The protein operates within protein modification; protein ubiquitination. E3 ubiquitin ligase catalyzing the covalent attachment of ubiquitin moieties onto substrate proteins. May operate on tyrosine-phosphorylated SRC substrates. The polypeptide is E3 ubiquitin-protein ligase CBLL2 (CBLL2) (Macaca fascicularis (Crab-eating macaque)).